The following is a 373-amino-acid chain: P2Y purinoceptor 1 (373 aa).

Topologically, residues 1–51 are extracellular; that stretch reads MTEVLWPAAPNGTDAAFLASPGFHWGNSTATSTAAAAAPFRCALTKTGFQF. N-linked (GlcNAc...) asparagine glycosylation is found at N11 and N27. 2 disulfide bridges follow: C42–C296 and C124–C202. K46 contributes to the ADP binding site. A helical transmembrane segment spans residues 52 to 74; sequence YYLPAVYIVVFIIGFLGNSIAIW. At 75-87 the chain is on the cytoplasmic side; it reads MFVFHMKPWSGIS. The helical transmembrane segment at 88–109 threads the bilayer; it reads VYMFNLALADFLYVLTLPALIF. Over 110–125 the chain is Extracellular; sequence YYFNKTNWIFGDAMCK. N113 is a glycosylation site (N-linked (GlcNAc...) asparagine). Residues 126–147 traverse the membrane as a helical segment; it reads LQRFIFHVNLYGSILFLTCISA. Residues 148–166 are Cytoplasmic-facing; that stretch reads HRYSGVVYPLKSLGRLKKK. Residues 167–188 traverse the membrane as a helical segment; it reads NAVYISVLVWLIVVVAISPILF. At 189 to 214 the chain is on the extracellular side; sequence YSGTGIRKNKTITCYDTTSDEYLRSY. A glycan (N-linked (GlcNAc...) asparagine) is linked at N197. 203–205 lines the ADP pocket; sequence YDT. A helical transmembrane segment spans residues 215–237; it reads FIYSMCTTVAMFCVPLVLILGCY. Over 238 to 260 the chain is Cytoplasmic; the sequence is GLIVRALIYKDLDNSPLRRKSIY. A helical membrane pass occupies residues 261–284; it reads LVIIVLTVFAVSYIPFHVMKTMNL. Residues 283-287, 303-306, and R310 each bind ADP; these read NLRAR and YATY. Residues 285-303 are Extracellular-facing; sequence RARLDFQTPEMCTFNDRVY. A helical transmembrane segment spans residues 304–325; it reads ATYQVTRGLASLNSCVDPILYF. At 326 to 373 the chain is on the cytoplasmic side; sequence LAGDTFRRRLSRATRKASRRSEANLQSKSEDMTLNILSEFKQNGDTSL.

It belongs to the G-protein coupled receptor 1 family.

The protein resides in the cell membrane. In terms of biological role, receptor for extracellular adenine nucleotides such as ADP. In platelets, binding to ADP leads to mobilization of intracellular calcium ions via activation of phospholipase C, a change in platelet shape, and ultimately platelet aggregation. This chain is P2Y purinoceptor 1 (P2RY1), found in Cavia porcellus (Guinea pig).